The following is a 358-amino-acid chain: tRNA-specific 2-thiouridylase MnmA (358 aa).

ATP is bound by residues 8–15 (GLSGGVDS) and methionine 34. The tract at residues 94-96 (NPD) is interaction with target base in tRNA. Cysteine 99 (nucleophile) is an active-site residue. Cysteines 99 and 196 form a disulfide. Glycine 123 provides a ligand contact to ATP. Positions 146–148 (KDQ) are interaction with tRNA. The active-site Cysteine persulfide intermediate is the cysteine 196. The interval 308–309 (RY) is interaction with tRNA.

It belongs to the MnmA/TRMU family.

The protein resides in the cytoplasm. It carries out the reaction S-sulfanyl-L-cysteinyl-[protein] + uridine(34) in tRNA + AH2 + ATP = 2-thiouridine(34) in tRNA + L-cysteinyl-[protein] + A + AMP + diphosphate + H(+). Functionally, catalyzes the 2-thiolation of uridine at the wobble position (U34) of tRNA, leading to the formation of s(2)U34. The polypeptide is tRNA-specific 2-thiouridylase MnmA (Thiobacillus denitrificans (strain ATCC 25259 / T1)).